A 119-amino-acid polypeptide reads, in one-letter code: Large ribosomal subunit protein bL20 (119 aa).

This sequence belongs to the bacterial ribosomal protein bL20 family.

Binds directly to 23S ribosomal RNA and is necessary for the in vitro assembly process of the 50S ribosomal subunit. It is not involved in the protein synthesizing functions of that subunit. This Heliobacterium modesticaldum (strain ATCC 51547 / Ice1) protein is Large ribosomal subunit protein bL20.